A 254-amino-acid polypeptide reads, in one-letter code: K88 minor fimbrial subunit FaeI (254 aa).

A signal peptide spans 1-20; that stretch reads MKKVTLFLFVVSLLPSTVLA.

It belongs to the fimbrial K88 protein family.

Its subcellular location is the fimbrium. Functionally, K88 minor fimbrial subunit, plays an essential role in the biogenesis of the K88 fimbriae. Fimbriae (also called pili), are polar filaments radiating from the surface of the bacterium to a length of 0.5-1.5 micrometers and numbering 100-300 per cell. They enable bacteria to colonize the epithelium of specific host organs. This is K88 minor fimbrial subunit FaeI (faeI) from Escherichia coli.